The sequence spans 441 residues: Protein kinase C and casein kinase substrate in neurons protein 1 (441 aa).

A phosphoserine mark is found at Ser-2 and Ser-76. The F-BAR domain occupies 10-280; sequence EEITDSFWEV…AIRGADAQED (271 aa). Residues 23 to 272 adopt a coiled-coil conformation; sequence KRTVKRIDDG…HVYRELEQAI (250 aa). At Thr-181 the chain carries Phosphothreonine. Residues 310–380 are disordered; that stretch reads AAKKEKQPKK…ANGGANPFED (71 aa). The segment covering 311–321 has biased composition (basic and acidic residues); the sequence is AKKEKQPKKAE. Residues 326–348 show a composition bias toward polar residues; that stretch reads SNATGAVESTSQAGDRGSVSSYD. A phosphoserine mark is found at Ser-343, Ser-345, Ser-346, Ser-358, and Ser-362. The SH3 domain maps to 382–441; that stretch reads AKGVRVRALYDYDGQEQDELSFKAGDELTKLGEEDEQGWCRGRLDSGQLGLYPANYVEAI. A Phosphotyrosine modification is found at Tyr-391. Ser-402 and Ser-427 each carry phosphoserine.

This sequence belongs to the PACSIN family. As to quaternary structure, homodimer. May form heterooligomers with other PACSINs. Interacts with MAPT. Interacts with TRPV4. Interacts (via SH3 domain) with SYNJ1 and WASL. Interacts (via SH3 domain) with DNM1; the interaction is reduced by DNM1 phosphorylation. Interacts with DNM2 and DNM3. Interacts with both COBL and DBNL. Identified in a complex composed of COBL, PACSIN1 and WASL. Interacts with EHD1 and EHD3. In terms of processing, phosphorylated by casein kinase 2 (CK2) and protein kinase C (PKC). Highly expressed in brain (at protein level).

It is found in the cytoplasm. The protein resides in the cell projection. Its subcellular location is the synapse. It localises to the synaptosome. The protein localises to the ruffle membrane. It is found in the membrane. The protein resides in the cytoplasmic vesicle membrane. Its subcellular location is the cytosol. It localises to the cell membrane. In terms of biological role, binds to membranes via its F-BAR domain and mediates membrane tubulation. Plays a role in the reorganization of the microtubule cytoskeleton via its interaction with MAPT; this decreases microtubule stability and inhibits MAPT-induced microtubule polymerization. Plays a role in cellular transport processes by recruiting DNM1, DNM2 and DNM3 to membranes. Plays a role in the reorganization of the actin cytoskeleton and in neuron morphogenesis via its interaction with COBL and WASL, and by recruiting COBL to the cell cortex. Plays a role in the regulation of neurite formation, neurite branching and the regulation of neurite length. Required for normal synaptic vesicle endocytosis; this process retrieves previously released neurotransmitters to accommodate multiple cycles of neurotransmission. Required for normal excitatory and inhibitory synaptic transmission. The chain is Protein kinase C and casein kinase substrate in neurons protein 1 (Pacsin1) from Rattus norvegicus (Rat).